A 340-amino-acid polypeptide reads, in one-letter code: Anthocyanidin reductase (340 aa).

NADP(+) contacts are provided by Lys-49 and Tyr-169.

Belongs to the NAD(P)-dependent epimerase/dehydratase family. Dihydroflavonol-4-reductase subfamily. As to quaternary structure, homo- or heterodimer. In terms of tissue distribution, flowers and young siliques. Detected specifically in the endothelium of seed coat.

It carries out the reaction a (2R,3R)-flavan-3-ol + 2 NAD(+) = an anthocyanidin with a 3-hydroxy group + 2 NADH + 2 H(+). The catalysed reaction is a (2R,3R)-flavan-3-ol + 2 NADP(+) = an anthocyanidin with a 3-hydroxy group + 2 NADPH + 2 H(+). It functions in the pathway secondary metabolite biosynthesis; flavonoid biosynthesis. Its activity is regulated as follows. Inhibited by (+)-catechin, quercetin and (+)- and (-)-dihydroquercetin. Not inhibited by salt. Positive cooperativity with NADPH acting as cosubstrate and modulator. In terms of biological role, involved in the biosynthesis of condensed tannins. Converts cyanidin into (-)-epicatechin as the major product. In Arabidopsis thaliana (Mouse-ear cress), this protein is Anthocyanidin reductase (BAN).